We begin with the raw amino-acid sequence, 309 residues long: Homoserine O-succinyltransferase (309 aa).

The Acyl-thioester intermediate role is filled by Cys-142. Substrate-binding residues include Lys-163 and Ser-192. Residue His-235 is the Proton acceptor of the active site. The active site involves Glu-237. Arg-249 is a substrate binding site.

Belongs to the MetA family.

The protein resides in the cytoplasm. It catalyses the reaction L-homoserine + succinyl-CoA = O-succinyl-L-homoserine + CoA. Its pathway is amino-acid biosynthesis; L-methionine biosynthesis via de novo pathway; O-succinyl-L-homoserine from L-homoserine: step 1/1. In terms of biological role, transfers a succinyl group from succinyl-CoA to L-homoserine, forming succinyl-L-homoserine. This is Homoserine O-succinyltransferase from Erwinia tasmaniensis (strain DSM 17950 / CFBP 7177 / CIP 109463 / NCPPB 4357 / Et1/99).